A 126-amino-acid chain; its full sequence is MHLSLLKAKIHRATVTHSELNYEGSIAIDGLLLEATGIREFEQVHIWDVTNGARFSTYAIRAEDGSGIMSLNGGAARHVQVGDLIIVAAFASMSEDEAKTFKPNLVYVNAHNAISHTNHSIPTQAA.

Ser25 serves as the catalytic Schiff-base intermediate with substrate; via pyruvic acid. Ser25 carries the post-translational modification Pyruvic acid (Ser). Residue Thr57 coordinates substrate. Tyr58 acts as the Proton donor in catalysis. 73 to 75 is a binding site for substrate; the sequence is GGA.

This sequence belongs to the PanD family. As to quaternary structure, heterooctamer of four alpha and four beta subunits. Requires pyruvate as cofactor. Is synthesized initially as an inactive proenzyme, which is activated by self-cleavage at a specific serine bond to produce a beta-subunit with a hydroxyl group at its C-terminus and an alpha-subunit with a pyruvoyl group at its N-terminus.

The protein localises to the cytoplasm. The catalysed reaction is L-aspartate + H(+) = beta-alanine + CO2. It participates in cofactor biosynthesis; (R)-pantothenate biosynthesis; beta-alanine from L-aspartate: step 1/1. Its function is as follows. Catalyzes the pyruvoyl-dependent decarboxylation of aspartate to produce beta-alanine. In Xanthomonas axonopodis pv. citri (strain 306), this protein is Aspartate 1-decarboxylase.